A 161-amino-acid polypeptide reads, in one-letter code: uncharacterized protein (161 aa).

This is an uncharacterized protein from Haemophilus influenzae (strain ATCC 51907 / DSM 11121 / KW20 / Rd).